Reading from the N-terminus, the 148-residue chain is Putative anti-anti-sigma factor Rv2638 (148 aa).

The STAS domain maps to 30 to 141; sequence LRATTDGSGA…PTVDTALGKG (112 aa).

It belongs to the anti-sigma-factor antagonist family. Interacts with unphosphorylated OprA.

This is Putative anti-anti-sigma factor Rv2638 from Mycobacterium tuberculosis (strain ATCC 25618 / H37Rv).